A 378-amino-acid polypeptide reads, in one-letter code: Acetylornithine deacetylase (378 aa).

Zn(2+) is bound at residue His76. Residue Asp78 is part of the active site. Residue Asp108 participates in Zn(2+) binding. The active site involves Glu140. 3 residues coordinate Zn(2+): Glu141, Glu165, and His351.

It belongs to the peptidase M20A family. ArgE subfamily. As to quaternary structure, homodimer. It depends on Zn(2+) as a cofactor. Co(2+) serves as cofactor. Glutathione is required as a cofactor.

The protein localises to the cytoplasm. The enzyme catalyses N(2)-acetyl-L-ornithine + H2O = L-ornithine + acetate. It functions in the pathway amino-acid biosynthesis; L-arginine biosynthesis; L-ornithine from N(2)-acetyl-L-ornithine (linear): step 1/1. In terms of biological role, catalyzes the hydrolysis of the amide bond of N(2)-acetylated L-amino acids. Cleaves the acetyl group from N-acetyl-L-ornithine to form L-ornithine, an intermediate in L-arginine biosynthesis pathway, and a branchpoint in the synthesis of polyamines. This chain is Acetylornithine deacetylase, found in Aliivibrio fischeri (strain MJ11) (Vibrio fischeri).